Here is a 127-residue protein sequence, read N- to C-terminus: uncharacterized protein (127 aa).

This is an uncharacterized protein from Acanthamoeba polyphaga (Amoeba).